A 150-amino-acid polypeptide reads, in one-letter code: Galactose-binding lectin (150 aa).

Residues H16 and G19 each contribute to the D-galactose site. N-linked (GlcNAc...) asparagine glycosylation is present at N26. D-galactose contacts are provided by residues N27, D35–H37, H64, and G67. Residue N74 is glycosylated (N-linked (GlcNAc...) asparagine). D-galactose contacts are provided by residues E75, D83–H85, H108, and G111. N118 carries an N-linked (GlcNAc...) asparagine glycan. D-galactose-binding positions include N119 and D127–H129.

As to quaternary structure, monomer in solution. Homodimer in solution. Exists as a monomer in solution when a low concentration (0.001 mg/ml) of it is present. Homodimers start to appear at a concentration of 0.01 mg/ml and tetramers at a concentration of 0.1 mg/ml. As to expression, highly expressed in mantle and to a lesser extent in muscle, hepatopancreas, gill and hemocytes.

With respect to regulation, bacterial binding activity is inhibited by D-galactose. Hemagglutinating activity is independent of divalent cations Ca2(+) or Mg2(+). It is strongly inhibited by N-acetyl-D-galactosamine (GalNAc), D-galactose and D-talose, and to a lesser extent by melibiose and raffinose. Also inhibited by glycoprotein asialo-bovine submaxillary mucin (BSM). Not inhibited by D-glucose, D-fucose, D-galactitol, N-acetyl-D-glucosamine or lactose. Fungal binding activity is inhibited by D-galactose. Cytotoxic activity against Raji cell line is completely inhibited by galactose, melibiose and raffinose, but not by glucose or lactose. Galactose inhibits binding to laminin and BSM, but not to collagen, gelatin or fibronectin. Its function is as follows. Galactose-binding lectin. Binds both alpha and beta anomer of galactose (Gal), but has a stronger interaction with the glycans having alpha Gal at the non-reducing end and binds beta Gal weakly only in highly branched glycans. Has high affinity to Galalpha1-4Galbeta1-4GlcNAc. Binds N-acetyl-2-deoxy-2-amino-galactose (2-deoxy-GalNAc). Binds N-acetylgalactosamine (GalNAc). Binds porcine stomach mucin (PSM) with high affinity. Binds galactosamine. Binds laminin, bovine submaxillary mucin (BSM), fibronectin, type I collagen and gelatin with a decreasing affinity, respectively. Has hemagglutinating activity towards human type A erythrocytes. Also hemagglutinates human type 0, B and AB erythrocytes as well as rabbit and mouse erythrocytes. Agglutinates both Gram-positive and Gram-negative bacteria including B.subtilis ATCC 6633, S.aureus ATCC 21027 and E.coli 3254, respectively. No agglutination activity towards Gram-positive S.amurskyense CMM 3673. Has bacteriostatic activity on S.amurskyense CMM 3673, B.subtilis ATCC 6633, S.aureus ATCC 21027 and E.coli 3254. However, has no agglutination nor bacteriostatic activity on Gram-negative C.scophthalmum CIP 104199 or A.troitsensis KMM 3674. Inhibits growth of fungi from the genera Aspergillus, Penicillium, Trichoderma and st. Mycelia. Inhibits germination of spores and hyphal growth of them. Has dose-dependent cytotoxic effect on the human globotriaosylceramide (Gb3)-expressing Burkitt's lymphoma (Raji) cell line. Binds to Gb3 in these cells leading to activation of caspase-9/3 and PARP. Has dose-dependent cytotoxic effect on the Gb3-expressing human MCF-7 breast cancer cell line. No cytotoxic effect on myelogenous leukemia K562 cell line, which does not express Gb3. Activates immune responses in mice and increases cytokine production of TNF-alpha, IL-6 and MCP-1 in the serum and the peritoneal lavage of mice. Induces TNF-alpha and IL-6 secretion in mouse RAW264.7 macrophages, mouse bone marrow-derived macrophages, human THP-1 macrophages, human peripheral blood mononuclear cells (PBMCs) and human blood monocyte-derived macrophages. TNF-alpha production in macrophages could not be inhibited by GalNAc, GalN or Gal, indicating that induced cytokine production is separate from its sugar binding activity. Increases intracellular reactive oxygen species levels, expression and phosphorylation of protein kinases PKC alpha/delta, expression of COX-2 and NF-kappaB, and activates the MAPK pathway by increasing the phosphorylation of ERK1/2, JNK1/2 and p38 in mouse RAW264.7 macrophages. Induces endotoxin tolerance in lipopolysaccharide(LPS)-activated macrophages by down-regulating IRAK2 expression, reducing JNK1/2 phosphorylation and NF-kappaB activation. Can slightly increase the bactericidal activity of RAW264.7 macrophages. Has DNA-binding activity. Recognizes pathogen-associated molecular patterns (PAMPs) and binds to LPS from E.coli, but has only little binding to beta-1,3-glucan from E.gracilis and peptidoglycan from S.aureus. Activates secretion of TNF-alpha and IFN-gamma by the human peripheral blood cells (HPBCs). May be involved in innate immunity acting as an antibacterial and antifungal agent involved in the recognition and clearance of pathogens. In Crenomytilus grayanus (Gray mussel), this protein is Galactose-binding lectin.